A 221-amino-acid polypeptide reads, in one-letter code: UPF0502 protein Sputw3181_2381 (221 aa).

This sequence belongs to the UPF0502 family.

The protein is UPF0502 protein Sputw3181_2381 of Shewanella sp. (strain W3-18-1).